Here is a 155-residue protein sequence, read N- to C-terminus: 6,7-dimethyl-8-ribityllumazine synthase (155 aa).

5-amino-6-(D-ribitylamino)uracil-binding positions include Phe23, 57 to 59 (AFE), and 81 to 83 (AVI). Residue 86-87 (ST) participates in (2S)-2-hydroxy-3-oxobutyl phosphate binding. His89 functions as the Proton donor in the catalytic mechanism. Phe114 is a 5-amino-6-(D-ribitylamino)uracil binding site. Arg128 provides a ligand contact to (2S)-2-hydroxy-3-oxobutyl phosphate.

The protein belongs to the DMRL synthase family.

The enzyme catalyses (2S)-2-hydroxy-3-oxobutyl phosphate + 5-amino-6-(D-ribitylamino)uracil = 6,7-dimethyl-8-(1-D-ribityl)lumazine + phosphate + 2 H2O + H(+). Its pathway is cofactor biosynthesis; riboflavin biosynthesis; riboflavin from 2-hydroxy-3-oxobutyl phosphate and 5-amino-6-(D-ribitylamino)uracil: step 1/2. Catalyzes the formation of 6,7-dimethyl-8-ribityllumazine by condensation of 5-amino-6-(D-ribitylamino)uracil with 3,4-dihydroxy-2-butanone 4-phosphate. This is the penultimate step in the biosynthesis of riboflavin. The sequence is that of 6,7-dimethyl-8-ribityllumazine synthase from Geobacter metallireducens (strain ATCC 53774 / DSM 7210 / GS-15).